The chain runs to 317 residues: Transcription factor elt-3 (317 aa).

The segment at 1–34 (METANYYLPSPPYSSTSSSDSRESRMNTPIPTTY) is disordered. The GATA-type zinc finger occupies 244-268 (CSNCKTRETTLWRRNGEGGVECNAC). A disordered region spans residues 290–317 (KRNRRPRNESPNSAIRNTHQRHGHAAAC). Residues 307–317 (THQRHGHAAAC) are compositionally biased toward basic residues.

Interacts with skn-1; interaction may enhance transcriptional activation of target genes. In terms of tissue distribution, expressed in head, trunk and tail. Expression decreases with age in the hypodermal cells and the pharyngeal-intestinal valve cells in the head, eventually showing little or no expression in about 14 day old worms. Expressed in hypodermal, but not in intestinal, cells at 1 day of age. Expression in the hypodermal and intestinal cells in the trunk region decreases quickly between day 3 and day 5 of adulthood. Expression in the tail between days 3 and 14 stays approximately uniform.

The protein resides in the nucleus. Functionally, transcription factor. Required, in concert with signal transducer and transcription factor sta-2, for up-regulation of the vacuolar H(+)-ATPase and acceleration of lysosome maturation at molt. Involved in regulating hypodermal development, perhaps acting downstream of transcription factor elt-1. Modulates environmentally induced changes in collagen gene expression, including rol-6, sqt-1, lon-3, and dpy-13. Involved in regulating expression of various genes, including gst-4, sod-3, ugt-9, and col-144. In response to oxidative stress, required to up-regulate expression of gst-4 mRNA. Regulated by the Insulin/IGF-1-like signaling (IIS) mediated pathway. Plays a role in longevity. May regulate the expression of genes that control sensitivity to osmotic stress, in conjunction with the GATA region-binding transcription factor elt-2. May form a transcriptional circuit with GATA factors egl-18 and elt-6. This chain is Transcription factor elt-3, found in Caenorhabditis elegans.